A 152-amino-acid chain; its full sequence is Protein SprT-like (152 aa).

The SprT-like domain maps to 7–148; sequence QRLVEEVSLQ…GKCKGKLILI (142 aa). Histidine 67 is a binding site for Zn(2+). Glutamate 68 is a catalytic residue. Histidine 71 is a Zn(2+) binding site.

It belongs to the SprT family. Requires Zn(2+) as cofactor.

The protein localises to the cytoplasm. The chain is Protein SprT-like from Bacillus cereus (strain AH187).